Here is a 449-residue protein sequence, read N- to C-terminus: Phosphoglucosamine mutase (449 aa).

The active-site Phosphoserine intermediate is the S101. Mg(2+) is bound by residues S101, D242, D244, and D246. Residue S101 is modified to Phosphoserine.

This sequence belongs to the phosphohexose mutase family. Mg(2+) is required as a cofactor. Activated by phosphorylation.

It carries out the reaction alpha-D-glucosamine 1-phosphate = D-glucosamine 6-phosphate. Catalyzes the conversion of glucosamine-6-phosphate to glucosamine-1-phosphate. This chain is Phosphoglucosamine mutase, found in Hyphomonas neptunium (strain ATCC 15444).